We begin with the raw amino-acid sequence, 202 residues long: ATP-dependent Clp protease proteolytic subunit 1 (202 aa).

Serine 102 acts as the Nucleophile in catalysis. The active site involves histidine 127.

Belongs to the peptidase S14 family. Fourteen ClpP subunits assemble into 2 heptameric rings which stack back to back to give a disk-like structure with a central cavity, resembling the structure of eukaryotic proteasomes.

The protein resides in the cytoplasm. It catalyses the reaction Hydrolysis of proteins to small peptides in the presence of ATP and magnesium. alpha-casein is the usual test substrate. In the absence of ATP, only oligopeptides shorter than five residues are hydrolyzed (such as succinyl-Leu-Tyr-|-NHMec, and Leu-Tyr-Leu-|-Tyr-Trp, in which cleavage of the -Tyr-|-Leu- and -Tyr-|-Trp bonds also occurs).. Cleaves peptides in various proteins in a process that requires ATP hydrolysis. Has a chymotrypsin-like activity. Plays a major role in the degradation of misfolded proteins. This Agrobacterium fabrum (strain C58 / ATCC 33970) (Agrobacterium tumefaciens (strain C58)) protein is ATP-dependent Clp protease proteolytic subunit 1.